The primary structure comprises 354 residues: Uroporphyrinogen decarboxylase (354 aa).

Substrate is bound by residues 27–31, Phe-46, Asp-77, Tyr-154, Thr-209, and His-327; that span reads RRAGR.

This sequence belongs to the uroporphyrinogen decarboxylase family. Homodimer.

Its subcellular location is the cytoplasm. The enzyme catalyses uroporphyrinogen III + 4 H(+) = coproporphyrinogen III + 4 CO2. Its pathway is porphyrin-containing compound metabolism; protoporphyrin-IX biosynthesis; coproporphyrinogen-III from 5-aminolevulinate: step 4/4. In terms of biological role, catalyzes the decarboxylation of four acetate groups of uroporphyrinogen-III to yield coproporphyrinogen-III. The sequence is that of Uroporphyrinogen decarboxylase from Salmonella typhimurium (strain LT2 / SGSC1412 / ATCC 700720).